The primary structure comprises 533 residues: Flavin-dependent halogenase gsfI (533 aa).

FAD is bound by residues glycine 14, glycine 17, and glutamate 47. Chloride contacts are provided by serine 331 and glycine 332.

This sequence belongs to the flavin-dependent halogenase family.

The catalysed reaction is griseophenone C + FADH2 + chloride + O2 = griseophenone B + FAD + 2 H2O + H(+). It participates in secondary metabolite biosynthesis; terpenoid biosynthesis. In terms of biological role, flavin-dependent halogenase; part of the gene cluster that mediates the biosynthesis of griseofulvin, an important antifungal drug that has been in use for a long time for treating dermatophyte infections. The first step of the pathway is the formation of the heptaketide backbone by gsfA which is initiated by priming with acetyl-CoA, followed by sequential condensations of 6 malonyl-CoA units. The resulting benzophenone can undergo a spontaneous dehydration to form norlichexanthone. However, the true precursor for the griseofulvin biosynthesis is not norlichexanthone, but the heptaketide benzophenone that is O-methylated at 3-OH by gsfB to produce griseophenone D which is further methylated at 9-OH by gsfC to yield griseophenone C. Griseophenone C is then substrate of halogenase gsfI which is responsible for the regio-specific chlorination at the C13 position to form griseophenone B. The cytochrome P450 gsfF catalyzes the coupling of orcinol and phloroglucinol rings in griseophenone B to form desmethyl-dehydrogriseofulvin A which is further methylated at 5-OH by gsfD to yield dehydrogriseofulvin. Finally, gsfE performs stereospecific reduction of enone 18 of dehydrogriseofulvin to afford the final product griseofulvin. This is Flavin-dependent halogenase gsfI from Penicillium aethiopicum.